The sequence spans 331 residues: Nucleotide sugar transporter SLC35B4 (331 aa).

11 helical membrane-spanning segments follow: residues 4–24 (AFAVGLVFAGCCSNVIFLELL), 30–50 (GCGNIVTFAQFLFIAVEGFLF), 59–79 (PAIPIRYYAIMVTMFFTVSVV), 92–112 (LHMIFRSGSLIANMILGIIIL), 124–144 (IALVSAGIFICTFMSAKQVTV), 153–173 (GFQAFAWWLLGIAALTFALLM), 201–221 (ALPLPGFIFLASDIYDHVVLF), 229–249 (VPVIGVTMPVMWFYLLMNVVT), 251–267 (YVCIRGVFILTTECTSL), 268–288 (TVTLVVTLRKFVSLIFSILYF), and 294–314 (MWHWLGTSFVFIGTLMYTEVW). The Mediates endoplasmic reticulum retention motif lies at 326-331 (KDDKKD).

This sequence belongs to the nucleotide-sugar transporter family. SLC35B subfamily.

The protein localises to the endoplasmic reticulum membrane. The enzyme catalyses UDP-N-acetyl-alpha-D-glucosamine(in) + UDP-alpha-D-glucuronate(out) = UDP-N-acetyl-alpha-D-glucosamine(out) + UDP-alpha-D-glucuronate(in). It catalyses the reaction UDP-alpha-D-xylose(in) + UDP-alpha-D-glucuronate(out) = UDP-alpha-D-xylose(out) + UDP-alpha-D-glucuronate(in). Functionally, antiporter that transports nucleotide sugars across the endoplasmic reticulum (ER) membrane in exchange for another nucleotide sugar. May couple UDP-alpha-D-glucuronate (UDP-GlcA) or UDP-alpha-D-xylose (UDP-Xyl) efflux to UDP-alpha-D-glucuronate (UDP-GlcA) influx into the ER lumen, which in turn stimulates glucuronidation and excretion of endobiotics and xenobiotics. The chain is Nucleotide sugar transporter SLC35B4 (Slc35b4) from Mus musculus (Mouse).